A 347-amino-acid chain; its full sequence is Phosphoribosylformylglycinamidine cyclo-ligase (347 aa).

Belongs to the AIR synthase family.

The protein localises to the cytoplasm. It carries out the reaction 2-formamido-N(1)-(5-O-phospho-beta-D-ribosyl)acetamidine + ATP = 5-amino-1-(5-phospho-beta-D-ribosyl)imidazole + ADP + phosphate + H(+). Its pathway is purine metabolism; IMP biosynthesis via de novo pathway; 5-amino-1-(5-phospho-D-ribosyl)imidazole from N(2)-formyl-N(1)-(5-phospho-D-ribosyl)glycinamide: step 2/2. This Prochlorococcus marinus (strain MIT 9312) protein is Phosphoribosylformylglycinamidine cyclo-ligase.